A 104-amino-acid chain; its full sequence is Pole-localizer protein TmaR (104 aa).

Coiled-coil stretches lie at residues 7-34 (IVNQ…NRKR) and 76-96 (SAEI…LTEE).

Belongs to the pole-localizer TmaR family.

The protein localises to the cytoplasm. Functionally, pole-localizer protein involved in the regulation of several cellular processes. This is Pole-localizer protein TmaR from Vibrio campbellii (strain ATCC BAA-1116).